Here is a 134-residue protein sequence, read N- to C-terminus: Small ribosomal subunit protein uS11 (134 aa).

The protein belongs to the universal ribosomal protein uS11 family. As to quaternary structure, part of the 30S ribosomal subunit. Interacts with proteins S7 and S18. Binds to IF-3.

In terms of biological role, located on the platform of the 30S subunit, it bridges several disparate RNA helices of the 16S rRNA. Forms part of the Shine-Dalgarno cleft in the 70S ribosome. This is Small ribosomal subunit protein uS11 from Paraburkholderia xenovorans (strain LB400).